The primary structure comprises 682 residues: Nephrocystin-1-like protein (682 aa).

A coiled-coil region spans residues 10–100 (LQDAINRFPQ…ALSPEKEQLS (91 aa)). Positions 96-188 (KEQLSFSVSV…PLESKTLNER (93 aa)) are disordered. Residues 128–148 (NDDESEDSDNDSEIIETDVQL) are compositionally biased toward acidic residues. Residues 215 to 275 (VRGNVFVAID…PKTYLQHVKE (61 aa)) enclose the SH3 domain.

The protein belongs to the nephrocystin-1 family. In terms of tissue distribution, expressed in ciliated sensory neurons of the head (amphid neurons) and the tail in hermaphrodites (phasmid neurons) and males (sensory ray neurons).

Functionally, plays a role in the extension of dendrites from phasmid ciliated sensory neurons. May be necessary for initial assembly of the cilium. The polypeptide is Nephrocystin-1-like protein (Caenorhabditis elegans).